The sequence spans 1188 residues: DNA-directed RNA polymerase subunit beta (1188 aa).

Positions 1149-1188 (ELRDLDEGEDDDVMHVDDLEKAREKQAQETPEVSENSEEK) are disordered. The span at 1161–1175 (VMHVDDLEKAREKQA) shows a compositional bias: basic and acidic residues.

It belongs to the RNA polymerase beta chain family. The RNAP catalytic core consists of 2 alpha, 1 beta, 1 beta' and 1 omega subunit. When a sigma factor is associated with the core the holoenzyme is formed, which can initiate transcription.

It carries out the reaction RNA(n) + a ribonucleoside 5'-triphosphate = RNA(n+1) + diphosphate. DNA-dependent RNA polymerase catalyzes the transcription of DNA into RNA using the four ribonucleoside triphosphates as substrates. This is DNA-directed RNA polymerase subunit beta from Streptococcus uberis (strain ATCC BAA-854 / 0140J).